A 318-amino-acid polypeptide reads, in one-letter code: Acetyl-coenzyme A carboxylase carboxyl transferase subunit alpha (318 aa).

The region spanning Lys-38–Ala-292 is the CoA carboxyltransferase C-terminal domain.

This sequence belongs to the AccA family. As to quaternary structure, acetyl-CoA carboxylase is a heterohexamer composed of biotin carboxyl carrier protein (AccB), biotin carboxylase (AccC) and two subunits each of ACCase subunit alpha (AccA) and ACCase subunit beta (AccD).

Its subcellular location is the cytoplasm. It carries out the reaction N(6)-carboxybiotinyl-L-lysyl-[protein] + acetyl-CoA = N(6)-biotinyl-L-lysyl-[protein] + malonyl-CoA. It participates in lipid metabolism; malonyl-CoA biosynthesis; malonyl-CoA from acetyl-CoA: step 1/1. In terms of biological role, component of the acetyl coenzyme A carboxylase (ACC) complex. First, biotin carboxylase catalyzes the carboxylation of biotin on its carrier protein (BCCP) and then the CO(2) group is transferred by the carboxyltransferase to acetyl-CoA to form malonyl-CoA. The polypeptide is Acetyl-coenzyme A carboxylase carboxyl transferase subunit alpha (Listeria welshimeri serovar 6b (strain ATCC 35897 / DSM 20650 / CCUG 15529 / CIP 8149 / NCTC 11857 / SLCC 5334 / V8)).